The sequence spans 412 residues: Probable tRNA pseudouridine synthase D (412 aa).

The Nucleophile role is filled by Asp97. Residues 167–370 (ALPNYYGYQR…YGGYRKVVLT (204 aa)) form the TRUD domain.

This sequence belongs to the pseudouridine synthase TruD family.

The catalysed reaction is uridine(13) in tRNA = pseudouridine(13) in tRNA. Its function is as follows. Could be responsible for synthesis of pseudouridine from uracil-13 in transfer RNAs. This is Probable tRNA pseudouridine synthase D from Pyrobaculum islandicum (strain DSM 4184 / JCM 9189 / GEO3).